The primary structure comprises 725 residues: Non-structural protein 4 (725 aa).

2 disordered regions span residues 1-26 (MSKG…GNRN) and 666-725 (DEVE…TKDE). Polar residues predominate over residues 7 to 16 (TVTSLVSGPP). Residues 675-686 (ENQKQELDAKSD) show a composition bias toward basic and acidic residues. Positions 687–709 (DVEESSVEGEEDDDGSSASEETD) are enriched in acidic residues.

This Rice gall dwarf virus (RGDV) protein is Non-structural protein 4.